Here is a 364-residue protein sequence, read N- to C-terminus: MAQQTPLYEQHTLCGARMVDFHGWMMPLHYGSQIDEHHAVRTDAGMFDVSHMTIVDLRGSRTREFLRYLLANDVAKLTKSGKALYSGMLNASGGVIDDLIVYYFTEDFFRLVVNSATREKDLSWITQHAEPFGIEITVRDDLSMIAVQGPNAQAKAATLFNDAQRQAVEGMKPFFGVQAGDLFIATTGYTGEVGYEIALPNEKAADFWRALVEAGVKPCGLGARDTLRLEAGMNLYSQEMDETISPLAANMGWTIAWEPADRDFIGREALEAQREHGTEKLVGLVMTEKGVLRNELPVRFTDAQGNQHEGIITSGTFSPTLGYSIALARVPEGIGETAIVQIRNREMPVKVTKPVFVRNGKAVA.

It belongs to the GcvT family. In terms of assembly, the glycine cleavage system is composed of four proteins: P, T, L and H.

The catalysed reaction is N(6)-[(R)-S(8)-aminomethyldihydrolipoyl]-L-lysyl-[protein] + (6S)-5,6,7,8-tetrahydrofolate = N(6)-[(R)-dihydrolipoyl]-L-lysyl-[protein] + (6R)-5,10-methylene-5,6,7,8-tetrahydrofolate + NH4(+). The glycine cleavage system catalyzes the degradation of glycine. This is Aminomethyltransferase from Escherichia coli O81 (strain ED1a).